The following is a 420-amino-acid chain: UDP-N-acetyl-D-mannosamine dehydrogenase (420 aa).

The NAD(+) site is built by tyrosine 13, isoleucine 14, aspartate 33, threonine 85, and threonine 126. The UDP-N-acetyl-alpha-D-mannosaminouronate site is built by arginine 160, valine 161, lysine 212, asparagine 216, arginine 219, histidine 250, arginine 252, and glycine 263. Lysine 212 serves as the catalytic Proton donor/acceptor. Catalysis depends on cysteine 266, which acts as the Nucleophile. Residues phenylalanine 330 and lysine 331 each contribute to the UDP-N-acetyl-alpha-D-mannosaminouronate site. Arginine 338 is a binding site for NAD(+). Lysine 416 serves as a coordination point for UDP-N-acetyl-alpha-D-mannosaminouronate.

This sequence belongs to the UDP-glucose/GDP-mannose dehydrogenase family. WecC subfamily. In terms of assembly, homodimer.

The enzyme catalyses UDP-N-acetyl-alpha-D-mannosamine + 2 NAD(+) + H2O = UDP-N-acetyl-alpha-D-mannosaminouronate + 2 NADH + 3 H(+). Its pathway is bacterial outer membrane biogenesis; enterobacterial common antigen biosynthesis. In terms of biological role, catalyzes the four-electron oxidation of UDP-N-acetyl-D-mannosamine (UDP-ManNAc), reducing NAD(+) and releasing UDP-N-acetylmannosaminuronic acid (UDP-ManNAcA). This Shigella flexneri protein is UDP-N-acetyl-D-mannosamine dehydrogenase.